The sequence spans 392 residues: 8-amino-7-oxononanoate synthase (392 aa).

108–109 (GF) is a pyridoxal 5'-phosphate binding site. His133 provides a ligand contact to substrate. Pyridoxal 5'-phosphate-binding positions include Ser180, 205–208 (DDAH), and 236–239 (TLSK). Lys239 is modified (N6-(pyridoxal phosphate)lysine). Thr353 provides a ligand contact to substrate.

Belongs to the class-II pyridoxal-phosphate-dependent aminotransferase family. BioF subfamily. As to quaternary structure, homodimer. Requires pyridoxal 5'-phosphate as cofactor.

It catalyses the reaction 6-carboxyhexanoyl-[ACP] + L-alanine + H(+) = (8S)-8-amino-7-oxononanoate + holo-[ACP] + CO2. It functions in the pathway cofactor biosynthesis; biotin biosynthesis. Its function is as follows. Catalyzes the decarboxylative condensation of pimeloyl-[acyl-carrier protein] and L-alanine to produce 8-amino-7-oxononanoate (AON), [acyl-carrier protein], and carbon dioxide. This is 8-amino-7-oxononanoate synthase from Bacillus pumilus (strain SAFR-032).